The sequence spans 197 residues: Recombination protein RecR (197 aa).

The C4-type zinc-finger motif lies at 57-72; that stretch reads CSVCFGITEDDPCHLC. A Toprim domain is found at 79–174; that stretch reads TTICVVEEPQ…RVTRLAHGIP (96 aa).

Belongs to the RecR family.

May play a role in DNA repair. It seems to be involved in an RecBC-independent recombinational process of DNA repair. It may act with RecF and RecO. The polypeptide is Recombination protein RecR (Geotalea daltonii (strain DSM 22248 / JCM 15807 / FRC-32) (Geobacter daltonii)).